The following is a 373-amino-acid chain: Chaperone protein DnaJ (373 aa).

A J domain is found at 4–69 (SYYEILEITQ…EKRAIYDRYG (66 aa)). Residues 135-212 (GCKKNIDFTY…CKGLGYNESK (78 aa)) form a CR-type zinc finger. 8 residues coordinate Zn(2+): Cys148, Cys151, Cys164, Cys167, Cys186, Cys189, Cys200, and Cys203. CXXCXGXG motif repeat units follow at residues 148 to 155 (CKTCNGTG), 164 to 171 (CPKCQGRG), 186 to 193 (CPDCQGIG), and 200 to 207 (CSDCKGLG).

It belongs to the DnaJ family. In terms of assembly, homodimer. Requires Zn(2+) as cofactor.

It localises to the cytoplasm. Participates actively in the response to hyperosmotic and heat shock by preventing the aggregation of stress-denatured proteins and by disaggregating proteins, also in an autonomous, DnaK-independent fashion. Unfolded proteins bind initially to DnaJ; upon interaction with the DnaJ-bound protein, DnaK hydrolyzes its bound ATP, resulting in the formation of a stable complex. GrpE releases ADP from DnaK; ATP binding to DnaK triggers the release of the substrate protein, thus completing the reaction cycle. Several rounds of ATP-dependent interactions between DnaJ, DnaK and GrpE are required for fully efficient folding. Also involved, together with DnaK and GrpE, in the DNA replication of plasmids through activation of initiation proteins. The polypeptide is Chaperone protein DnaJ (Campylobacter jejuni (strain RM1221)).